The following is a 362-amino-acid chain: 3-dehydroquinate synthase (362 aa).

NAD(+)-binding positions include 70-75, 104-108, 128-129, K141, K150, and 168-171; these read EGEQYK, GVIGD, TT, and TLTT. Zn(2+) is bound by residues E183, H246, and H263.

Belongs to the sugar phosphate cyclases superfamily. Dehydroquinate synthase family. Requires Co(2+) as cofactor. Zn(2+) serves as cofactor. NAD(+) is required as a cofactor.

Its subcellular location is the cytoplasm. It catalyses the reaction 7-phospho-2-dehydro-3-deoxy-D-arabino-heptonate = 3-dehydroquinate + phosphate. Its pathway is metabolic intermediate biosynthesis; chorismate biosynthesis; chorismate from D-erythrose 4-phosphate and phosphoenolpyruvate: step 2/7. In terms of biological role, catalyzes the conversion of 3-deoxy-D-arabino-heptulosonate 7-phosphate (DAHP) to dehydroquinate (DHQ). The sequence is that of 3-dehydroquinate synthase from Histophilus somni (strain 129Pt) (Haemophilus somnus).